We begin with the raw amino-acid sequence, 121 residues long: Large ribosomal subunit protein eL18 (121 aa).

The protein belongs to the eukaryotic ribosomal protein eL18 family. Part of the 50S ribosomal subunit.

In Thermococcus kodakarensis (strain ATCC BAA-918 / JCM 12380 / KOD1) (Pyrococcus kodakaraensis (strain KOD1)), this protein is Large ribosomal subunit protein eL18.